The primary structure comprises 394 residues: Cytochrome b (394 aa).

Transmembrane regions (helical) follow at residues 39–59 (FGSL…FLAM), 83–105 (WLLR…LHTF), 120–140 (VWCL…IGYV), and 186–206 (FFSL…LHLA). The heme b site is built by His-89 and His-103. 2 residues coordinate heme b: His-191 and His-204. His-209 contacts a ubiquinone. A run of 4 helical transmembrane segments spans residues 232–252 (FYVK…IWIF), 296–316 (AGGV…PFFK), 328–348 (IYQG…WIGC), and 355–374 (FVTI…AITP).

It belongs to the cytochrome b family. As to quaternary structure, the main subunits of complex b-c1 are: cytochrome b, cytochrome c1 and the Rieske protein. Heme b is required as a cofactor.

Its subcellular location is the mitochondrion inner membrane. Functionally, component of the ubiquinol-cytochrome c reductase complex (complex III or cytochrome b-c1 complex) that is part of the mitochondrial respiratory chain. The b-c1 complex mediates electron transfer from ubiquinol to cytochrome c. Contributes to the generation of a proton gradient across the mitochondrial membrane that is then used for ATP synthesis. This is Cytochrome b (MT-CYB) from Oenothera berteroana (Bertero's evening primrose).